A 154-amino-acid polypeptide reads, in one-letter code: 6,7-dimethyl-8-ribityllumazine synthase (154 aa).

5-amino-6-(D-ribitylamino)uracil-binding positions include F22, 56–58 (AFE), and 80–82 (AVI). Residue 85–86 (AT) coordinates (2S)-2-hydroxy-3-oxobutyl phosphate. The Proton donor role is filled by H88. Position 113 (F113) interacts with 5-amino-6-(D-ribitylamino)uracil. R127 lines the (2S)-2-hydroxy-3-oxobutyl phosphate pocket.

This sequence belongs to the DMRL synthase family. In terms of assembly, forms an icosahedral capsid composed of 60 subunits, arranged as a dodecamer of pentamers.

It carries out the reaction (2S)-2-hydroxy-3-oxobutyl phosphate + 5-amino-6-(D-ribitylamino)uracil = 6,7-dimethyl-8-(1-D-ribityl)lumazine + phosphate + 2 H2O + H(+). Its pathway is cofactor biosynthesis; riboflavin biosynthesis; riboflavin from 2-hydroxy-3-oxobutyl phosphate and 5-amino-6-(D-ribitylamino)uracil: step 1/2. Catalyzes the formation of 6,7-dimethyl-8-ribityllumazine by condensation of 5-amino-6-(D-ribitylamino)uracil with 3,4-dihydroxy-2-butanone 4-phosphate. This is the penultimate step in the biosynthesis of riboflavin. The protein is 6,7-dimethyl-8-ribityllumazine synthase of Geobacillus kaustophilus (strain HTA426).